The chain runs to 286 residues: Bifunctional protein FolD (286 aa).

166-168 (GAS) is an NADP(+) binding site.

It belongs to the tetrahydrofolate dehydrogenase/cyclohydrolase family. In terms of assembly, homodimer.

It carries out the reaction (6R)-5,10-methylene-5,6,7,8-tetrahydrofolate + NADP(+) = (6R)-5,10-methenyltetrahydrofolate + NADPH. The catalysed reaction is (6R)-5,10-methenyltetrahydrofolate + H2O = (6R)-10-formyltetrahydrofolate + H(+). It functions in the pathway one-carbon metabolism; tetrahydrofolate interconversion. In terms of biological role, catalyzes the oxidation of 5,10-methylenetetrahydrofolate to 5,10-methenyltetrahydrofolate and then the hydrolysis of 5,10-methenyltetrahydrofolate to 10-formyltetrahydrofolate. This is Bifunctional protein FolD from Idiomarina loihiensis (strain ATCC BAA-735 / DSM 15497 / L2-TR).